A 167-amino-acid polypeptide reads, in one-letter code: NADH-quinone oxidoreductase subunit B (167 aa).

C48, C49, C113, and C143 together coordinate [4Fe-4S] cluster.

This sequence belongs to the complex I 20 kDa subunit family. NDH-1 is composed of 14 different subunits. Subunits NuoB, C, D, E, F, and G constitute the peripheral sector of the complex. [4Fe-4S] cluster is required as a cofactor.

It is found in the cell membrane. The enzyme catalyses a quinone + NADH + 5 H(+)(in) = a quinol + NAD(+) + 4 H(+)(out). Its function is as follows. NDH-1 shuttles electrons from NADH, via FMN and iron-sulfur (Fe-S) centers, to quinones in the respiratory chain. Couples the redox reaction to proton translocation (for every two electrons transferred, four hydrogen ions are translocated across the cytoplasmic membrane), and thus conserves the redox energy in a proton gradient. This Wolbachia pipientis subsp. Culex pipiens (strain wPip) protein is NADH-quinone oxidoreductase subunit B.